The sequence spans 227 residues: MTNNLSGYRNKFVRVKTSKKRTVSSSNWLRRQLNDPYVAKARIDGFRSRAAYKLLEIHEKFKLFIPNMKIVDLGAAPGGWSQVASKLIKASDNNLNNKIISIDVLEIEHVAGVEFVQKDFFEADTEELIIQALDGRADIVMSDMASNTIGHKATDHIRTLLLCEQAFEFALKVLKPSGHFIAKIFRGGAENELLHKVKREFKTVKHFKPSSSRSESTEIYLVALNKK.

S-adenosyl-L-methionine contacts are provided by Gly-78, Trp-80, Asp-103, Asp-119, and Asp-143. The Proton acceptor role is filled by Lys-183.

It belongs to the class I-like SAM-binding methyltransferase superfamily. RNA methyltransferase RlmE family.

The protein resides in the cytoplasm. The catalysed reaction is uridine(2552) in 23S rRNA + S-adenosyl-L-methionine = 2'-O-methyluridine(2552) in 23S rRNA + S-adenosyl-L-homocysteine + H(+). In terms of biological role, specifically methylates the uridine in position 2552 of 23S rRNA at the 2'-O position of the ribose in the fully assembled 50S ribosomal subunit. This is Ribosomal RNA large subunit methyltransferase E from Rickettsia peacockii (strain Rustic).